Reading from the N-terminus, the 164-residue chain is Large ribosomal subunit protein uL23 (164 aa).

A disordered region spans residues 1–41 (MPAKAASAAASKKNSAPKSAVSKKVAKKGAPAAAAKPTKVV).

Belongs to the universal ribosomal protein uL23 family.

Its function is as follows. This protein binds to a specific region on the 26S rRNA. This is Large ribosomal subunit protein uL23 (RPL23A) from Trypanosoma brucei brucei.